The chain runs to 331 residues: Inositol 2-dehydrogenase (331 aa).

Belongs to the Gfo/Idh/MocA family. Homotetramer.

It catalyses the reaction myo-inositol + NAD(+) = scyllo-inosose + NADH + H(+). Involved in the oxidation of myo-inositol (MI) to 2-keto-myo-inositol (2KMI or 2-inosose). The protein is Inositol 2-dehydrogenase of Renibacterium salmoninarum (strain ATCC 33209 / DSM 20767 / JCM 11484 / NBRC 15589 / NCIMB 2235).